The following is a 96-amino-acid chain: Co-chaperonin GroES (96 aa).

It belongs to the GroES chaperonin family. In terms of assembly, heptamer of 7 subunits arranged in a ring. Interacts with the chaperonin GroEL.

It is found in the cytoplasm. Functionally, together with the chaperonin GroEL, plays an essential role in assisting protein folding. The GroEL-GroES system forms a nano-cage that allows encapsulation of the non-native substrate proteins and provides a physical environment optimized to promote and accelerate protein folding. GroES binds to the apical surface of the GroEL ring, thereby capping the opening of the GroEL channel. This Polynucleobacter asymbioticus (strain DSM 18221 / CIP 109841 / QLW-P1DMWA-1) (Polynucleobacter necessarius subsp. asymbioticus) protein is Co-chaperonin GroES.